The sequence spans 176 residues: bZIP transcription factor 8 (176 aa).

The segment at 44-101 (PNTSGGSDESMSDGSKIDPKRSPKYLEKRMKNNEAAKKSRASRKHREQKNQTENELLK) is disordered. Low complexity predominate over residues 47-57 (SGGSDESMSDG). The segment covering 58-80 (SKIDPKRSPKYLEKRMKNNEAAK) has biased composition (basic and acidic residues). Residues 65-128 (SPKYLEKRMK…AQMQITIRDM (64 aa)) form the bZIP domain. The interval 67-92 (KYLEKRMKNNEAAKKSRASRKHREQK) is basic motif. Positions 81–90 (KSRASRKHRE) are enriched in basic residues. Residues 91–101 (QKNQTENELLK) are compositionally biased toward basic and acidic residues. The segment at 100–107 (LKRKNAAL) is leucine-zipper.

Belongs to the bZIP family.

The chain is bZIP transcription factor 8 (zip-8) from Caenorhabditis elegans.